The following is a 184-amino-acid chain: Ribosome-recycling factor (184 aa).

This sequence belongs to the RRF family.

It localises to the cytoplasm. In terms of biological role, responsible for the release of ribosomes from messenger RNA at the termination of protein biosynthesis. May increase the efficiency of translation by recycling ribosomes from one round of translation to another. This Acinetobacter baylyi (strain ATCC 33305 / BD413 / ADP1) protein is Ribosome-recycling factor.